A 164-amino-acid polypeptide reads, in one-letter code: Protein-export protein SecB (164 aa).

The protein belongs to the SecB family. Homotetramer, a dimer of dimers. One homotetramer interacts with 1 SecA dimer.

The protein localises to the cytoplasm. Functionally, one of the proteins required for the normal export of preproteins out of the cell cytoplasm. It is a molecular chaperone that binds to a subset of precursor proteins, maintaining them in a translocation-competent state. It also specifically binds to its receptor SecA. The protein is Protein-export protein SecB of Stutzerimonas stutzeri (strain A1501) (Pseudomonas stutzeri).